Consider the following 780-residue polypeptide: Lethal(3)malignant brain tumor-like protein 3 (780 aa).

Positions 1–64 (MTESASSTSG…VKKATATTTW (64 aa)) are interaction with RBPJ. Required for transcription repressor activity on Notch target genes. A disordered region spans residues 149–220 (DKDQKEERDV…RKRRGDSAVL (72 aa)). Composition is skewed to acidic residues over residues 157 to 166 (DVEEDNEEED) and 185 to 194 (EDGEERDDEM). MBT repeat units lie at residues 232-332 (WCWA…LHPP), 340-439 (FNWQ…LITP), and 448-543 (FSWD…LQPP). A CCHHC-type; degenerate zinc finger spans residues 549–593 (LMEASEHGGCSTPGCKGIGHFKRARHLGPHSAANCPYSEINLNKD). Residues 597–665 (PDRLSGEMPP…GAREEPTVQQ (69 aa)) are disordered. Residues 600–710 (LSGEMPPASP…PASKVSKWST (111 aa)) are interaction with DCAF5. S608 carries the post-translational modification Phosphoserine. Residue K637 forms a Glycyl lysine isopeptide (Lys-Gly) (interchain with G-Cter in SUMO2) linkage. Residues 643–661 (RTESEMRTSHEARGAREEP) are compositionally biased toward basic and acidic residues. Residue K704 forms a Glycyl lysine isopeptide (Lys-Gly) (interchain with G-Cter in SUMO2) linkage. The 65-residue stretch at 708–772 (WSTDEVSEFI…FNSILMFKAA (65 aa)) folds into the SAM domain.

Interacts with RNF2. Interacts (via SAM domain) with SAMD1 (via SAM domain); the interaction mediates L3MBTL3 binding to chromatin. Interacts with RBPJ; the interaction is required for L3MBTL3 localization to chromatin and is impaired by Notch-derived peptides containing the intracellular domain (NICD). Interacts (via SAM domain) with KDM1A. Interacts with DCAF5. Interacts with DNMT1. Interacts with E2F1. Interacts with SOX2. Interacts with SFMBT1.

Its subcellular location is the nucleus. Functionally, is a negative regulator of Notch target genes expression, required for RBPJ-mediated transcriptional repression. It recruits KDM1A to Notch-responsive elements and promotes KDM1A-mediated H3K4me demethylation. Involved in the regulation of ubiquitin-dependent degradation of a set of methylated non-histone proteins, including SOX2, DNMT1 and E2F1. It acts as an adapter recruiting the CRL4-DCAF5 E3 ubiquitin ligase complex to methylated target proteins. Required for normal maturation of myeloid progenitor cells. The sequence is that of Lethal(3)malignant brain tumor-like protein 3 from Homo sapiens (Human).